The chain runs to 411 residues: F-box protein At4g19940 (411 aa).

Positions Arg29 to Leu75 constitute an F-box domain.

This chain is F-box protein At4g19940, found in Arabidopsis thaliana (Mouse-ear cress).